The chain runs to 107 residues: Protein TAP1 (107 aa).

The signal sequence occupies residues 1-23 (MESKRVDVLVGLMLIMAIFGVHS).

Stamen.

The chain is Protein TAP1 (TAP1) from Antirrhinum majus (Garden snapdragon).